We begin with the raw amino-acid sequence, 1058 residues long: Vacuolar protein sorting-associated protein 54 (1058 aa).

The stretch at Ser369–Leu389 forms a coiled coil.

It belongs to the VPS54 family. In terms of assembly, component of the Golgi-associated retrograde protein (GARP) complex, also called VFT (VPS fifty-three) complex, composed of vps-51, vps-52, vps-53 and vps-54. Within the complex interacts with vps-52 and vps-53.

The protein localises to the golgi apparatus. It localises to the trans-Golgi network. In terms of biological role, acts as a component of the GARP complex that is involved in retrograde transport from early and late endosomes to the trans-Golgi network (TGN). The GARP complex facilitates tethering as well as SNARE complex assembly at the Golgi. This chain is Vacuolar protein sorting-associated protein 54, found in Caenorhabditis elegans.